A 215-amino-acid polypeptide reads, in one-letter code: Adenylate kinase (215 aa).

Position 10-15 (10-15 (GSGKGT)) interacts with ATP. An NMP region spans residues 30–59 (STGDLFRTNIENDTPLGKEIKQIVENGQLV). AMP-binding positions include T31, R36, 57 to 59 (QLV), 85 to 88 (GFPR), and Q92. The segment at 121–158 (GRRICQSCCKIFNIYTLPTKEKEICDFCQGILYQRKDD) is LID. An ATP-binding site is contributed by R122. The Zn(2+) site is built by C125 and C128. 131–132 (IF) lines the ATP pocket. 2 residues coordinate Zn(2+): C145 and C148. Residues R155 and R166 each coordinate AMP. K194 contributes to the ATP binding site.

It belongs to the adenylate kinase family. As to quaternary structure, monomer.

It localises to the cytoplasm. The enzyme catalyses AMP + ATP = 2 ADP. The protein operates within purine metabolism; AMP biosynthesis via salvage pathway; AMP from ADP: step 1/1. Functionally, catalyzes the reversible transfer of the terminal phosphate group between ATP and AMP. Plays an important role in cellular energy homeostasis and in adenine nucleotide metabolism. This is Adenylate kinase from Borrelia recurrentis (strain A1).